The primary structure comprises 261 residues: MLAKRIIPCLDVHGGRVVKGTNFVNLRDAGDPVELAAVYDKEGADELVFLDITASSDGRAIMLDVVRRTAEEVFIPFTVGGGLRTVEDIREMLKAGADKISLNTSAVQTPQLIGDSAWKFGSQCIVVAIDARRRRDEEGRLLEGWEVYTHGGRKPTGIDVLEWARKVEELGCGEILLTSMDKDGTKDGYDIPLTRAVSEAVKIPVIASGGVGNLEHICEGLTAGKADAALAASIFHYKEYTIRETKEYLRGKGVHVRKWRD.

Residues D11 and D130 contribute to the active site.

Belongs to the HisA/HisF family. Heterodimer of HisH and HisF.

Its subcellular location is the cytoplasm. The catalysed reaction is 5-[(5-phospho-1-deoxy-D-ribulos-1-ylimino)methylamino]-1-(5-phospho-beta-D-ribosyl)imidazole-4-carboxamide + L-glutamine = D-erythro-1-(imidazol-4-yl)glycerol 3-phosphate + 5-amino-1-(5-phospho-beta-D-ribosyl)imidazole-4-carboxamide + L-glutamate + H(+). Its pathway is amino-acid biosynthesis; L-histidine biosynthesis; L-histidine from 5-phospho-alpha-D-ribose 1-diphosphate: step 5/9. IGPS catalyzes the conversion of PRFAR and glutamine to IGP, AICAR and glutamate. The HisF subunit catalyzes the cyclization activity that produces IGP and AICAR from PRFAR using the ammonia provided by the HisH subunit. This Heliobacterium mobile (Heliobacillus mobilis) protein is Imidazole glycerol phosphate synthase subunit HisF.